The sequence spans 219 residues: Ribosome maturation factor RimP (219 aa).

Disordered stretches follow at residues 1-38 and 189-219; these read MTQR…LATR and VEFT…DEER. A compositionally biased stretch (acidic residues) spans 198–219; it reads DAFDGTDEAGDFDDDDVEDEER.

The protein belongs to the RimP family.

The protein resides in the cytoplasm. Functionally, required for maturation of 30S ribosomal subunits. The protein is Ribosome maturation factor RimP of Salinispora arenicola (strain CNS-205).